The sequence spans 206 residues: 2,3-bisphosphoglycerate-dependent phosphoglycerate mutase (206 aa).

Substrate contacts are provided by residues 9-16, 22-23, Arg-61, 88-91, Lys-99, 115-116, and 159-160; these read RHGQSEWN, TG, ERDY, RR, and GN. The Tele-phosphohistidine intermediate role is filled by His-10. The active-site Proton donor/acceptor is Glu-88.

Belongs to the phosphoglycerate mutase family. BPG-dependent PGAM subfamily. As to quaternary structure, homodimer.

It catalyses the reaction (2R)-2-phosphoglycerate = (2R)-3-phosphoglycerate. Its pathway is carbohydrate degradation; glycolysis; pyruvate from D-glyceraldehyde 3-phosphate: step 3/5. Functionally, catalyzes the interconversion of 2-phosphoglycerate and 3-phosphoglycerate. This Chelativorans sp. (strain BNC1) protein is 2,3-bisphosphoglycerate-dependent phosphoglycerate mutase.